A 260-amino-acid chain; its full sequence is Oxidoreductase macE (260 aa).

This sequence belongs to the oxidoreductase OpS7 family.

It functions in the pathway secondary metabolite biosynthesis; terpenoid biosynthesis. Functionally, oxidoreductase; part of the gene cluster that mediates the biosynthesis of macrophorins, isoprenoid epoxycyclohexenones containing cyclized drimane moieties. The first step of the pathway is the synthesis of 6-methylsalicylic acid (6-MSA) by the polyketide synthase macA. 6-MSA is then converted to m-cresol by the decarboxylase macB. The cytochrome P450 monooxygenase macC then catalyzes the oxidation of m-cresol to toluquinol. Epoxidation of toluquinol is then performed by the short chain dehydrogenase macD, with the help of macE, and a further prenylation by macG leads to 7-deacetoxyyanuthone A. The next step is the hydroxylation of C-22 of 7-deacetoxyyanuthone A by the cytochrome P450 monooxygenase macH to yield 22-deacetylyanuthone A. O-Mevalon transferase macI then attaches mevalon to the hydroxyl group of 22-deacetylyanuthone A to produce yanuthone E. The terpene cyclase macJ catalyzes the cyclization of 22-deacetylyanuthone A to macrophorin A. MacJ is also able to catalyze cyclization of yanuthone E and 7-deacetoxyyanuthone A to their corresponding macrophorins. The macJ products can be further modified by macH and macJ, as well as by the FAD-dependent monooxygenase macF, to produce additional macrophorins, including 4'-oxomacrophorin A, 4'-oxomacrophorin D and 4'-oxomacrophorin E. The protein is Oxidoreductase macE of Penicillium terrestre.